The sequence spans 527 residues: Tetanolysin (527 aa).

An N-terminal signal peptide occupies residues 1-32; that stretch reads MNKNVLKFVSRSLLIFSMTGLISNYNSSNVLA. The next 4 beta stranded transmembrane spans lie at 215 to 228, 235 to 244, 313 to 322, and 330 to 342; these read QSQLSAAVGCNFKA, IDFDSIFKGE, SSHVKAAFKA, and SSNAEYKDILNQS. The Conserved undecapeptide signature appears at 484-494; that stretch reads ECTGLAWEWWR. The Cholesterol binding signature appears at 516–517; sequence TL.

The protein belongs to the cholesterol-dependent cytolysin family. In terms of assembly, homooligomeric pore complex containing 35-50 subunits; when inserted in the host membrane. In terms of processing, purified 48 and 53 kDa proteins with 4 different pIs (6.1, 5.6, 5.3 and 6.6) in decreasing order of activity.

The protein localises to the secreted. Its subcellular location is the host cell membrane. With respect to regulation, cytolysis of host cells is inhibited by cholesterol. In terms of biological role, a cholesterol-dependent toxin that causes cytolysis by forming pores in cholesterol-containing host membranes. After binding to target membranes, the protein undergoes a major conformation change, leading to its insertion in the host membrane and formation of an oligomeric pore complex. Cholesterol is required for binding to host membranes, membrane insertion and pore formation; cholesterol binding is mediated by a Thr-Leu pair in the C-terminus. In Clostridium tetani (strain Massachusetts / E88), this protein is Tetanolysin.